Consider the following 140-residue polypeptide: Endoribonuclease YbeY (140 aa).

Zn(2+)-binding residues include His99, His103, and His109.

It belongs to the endoribonuclease YbeY family. Requires Zn(2+) as cofactor.

The protein localises to the cytoplasm. Its function is as follows. Single strand-specific metallo-endoribonuclease involved in late-stage 70S ribosome quality control and in maturation of the 3' terminus of the 16S rRNA. The polypeptide is Endoribonuclease YbeY (Wolinella succinogenes (strain ATCC 29543 / DSM 1740 / CCUG 13145 / JCM 31913 / LMG 7466 / NCTC 11488 / FDC 602W) (Vibrio succinogenes)).